The primary structure comprises 234 residues: Flagellar L-ring protein (234 aa).

The N-terminal stretch at 1–15 (MRYAVICMLLLAASG) is a signal peptide. Residue cysteine 16 is the site of N-palmitoyl cysteine attachment. Cysteine 16 is lipidated: S-diacylglycerol cysteine.

The protein belongs to the FlgH family. As to quaternary structure, the basal body constitutes a major portion of the flagellar organelle and consists of four rings (L,P,S, and M) mounted on a central rod.

It localises to the cell outer membrane. The protein localises to the bacterial flagellum basal body. Functionally, assembles around the rod to form the L-ring and probably protects the motor/basal body from shearing forces during rotation. The chain is Flagellar L-ring protein from Oleidesulfovibrio alaskensis (strain ATCC BAA-1058 / DSM 17464 / G20) (Desulfovibrio alaskensis).